The following is a 107-amino-acid chain: Heme-degrading monooxygenase (107 aa).

The 93-residue stretch at 2–94 (IIVTNTAKIT…YILDNKIAYY (93 aa)) folds into the ABM domain. Asn-6 is a binding site for Fe cation. His-76 serves as a coordination point for heme.

The protein belongs to the antibiotic biosynthesis monooxygenase family. Heme-degrading monooxygenase IsdG subfamily. In terms of assembly, homodimer.

Its subcellular location is the cytoplasm. The enzyme catalyses heme b + 3 reduced [NADPH--hemoprotein reductase] + 3 O2 = biliverdin IXalpha + CO + Fe(2+) + 3 oxidized [NADPH--hemoprotein reductase] + 3 H2O + H(+). Allows bacterial pathogens to use the host heme as an iron source. Catalyzes the oxidative degradation of the heme macrocyclic porphyrin ring to the biliverdin in the presence of a suitable electron donor such as ascorbate or NADPH--cytochrome P450 reductase, with subsequent release of free iron. The polypeptide is Heme-degrading monooxygenase (Bacillus cereus (strain ATCC 14579 / DSM 31 / CCUG 7414 / JCM 2152 / NBRC 15305 / NCIMB 9373 / NCTC 2599 / NRRL B-3711)).